Here is a 610-residue protein sequence, read N- to C-terminus: Zinc metalloproteinase-disintegrin-like 3a (610 aa).

The first 19 residues, 1 to 19, serve as a signal peptide directing secretion; the sequence is MIQVLLVTILAVFPYQGSS. Residues 20–188 constitute a propeptide that is removed on maturation; sequence IILGSGNVND…KKASQLVVTA (169 aa). Positions 198-394 constitute a Peptidase M12B domain; sequence RYVELVIVAD…YTPKCILNEP (197 aa). Residue glutamate 201 participates in Ca(2+) binding. Asparagine 217 is a glycosylation site (N-linked (GlcNAc...) asparagine). Ca(2+) is bound at residue aspartate 285. Disulfide bonds link cysteine 309-cysteine 389, cysteine 349-cysteine 373, and cysteine 351-cysteine 356. Histidine 334 contributes to the Zn(2+) binding site. The active site involves glutamate 335. Positions 338 and 344 each coordinate Zn(2+). Residues cysteine 389, asparagine 392, valine 404, asparagine 407, glutamate 411, glutamate 414, and aspartate 417 each coordinate Ca(2+). A Disintegrin domain is found at 402–488; sequence PPVCGNELLE…DCPTDDFHKN (87 aa). Cystine bridges form between cysteine 405-cysteine 434, cysteine 416-cysteine 429, cysteine 418-cysteine 424, cysteine 428-cysteine 451, cysteine 442-cysteine 448, cysteine 447-cysteine 473, cysteine 460-cysteine 480, cysteine 467-cysteine 499, cysteine 492-cysteine 504, cysteine 511-cysteine 561, cysteine 526-cysteine 572, cysteine 539-cysteine 549, cysteine 556-cysteine 598, and cysteine 592-cysteine 603. Residues 466-468 carry the D/ECD-tripeptide motif; that stretch reads ECD.

Belongs to the venom metalloproteinase (M12B) family. P-III subfamily. Requires Zn(2+) as cofactor. In terms of tissue distribution, expressed by the venom gland.

The protein resides in the secreted. In terms of biological role, snake venom metalloproteinase that impairs hemostasis in the envenomed animal. This Crotalus adamanteus (Eastern diamondback rattlesnake) protein is Zinc metalloproteinase-disintegrin-like 3a.